A 190-amino-acid chain; its full sequence is Cytoplasmic envelopment protein 3 (190 aa).

Gly-2 carries N-myristoyl glycine; by host lipidation. The segment at 27–190 (RQVSLRSYDN…TKKPAASLPF (164 aa)) is disordered. Residues 30–43 (SLRSYDNIPPTSSS) show a composition bias toward polar residues. Acidic residues predominate over residues 44-58 (DEGEDDDDGEDDDNE). A compositionally biased stretch (basic and acidic residues) spans 80 to 90 (SHREATHDGSK). A compositionally biased stretch (basic residues) spans 108–123 (KQSKKKKKPSKHHHHQ). Residues 130-139 (ETDDLDEEDT) show a composition bias toward acidic residues.

The protein belongs to the herpesviridae cytoplasmic envelopment protein 3 family. As to quaternary structure, interacts with cytoplasmic envelopment protein 2; this interaction is essential for the proper localization of each protein to the assembly complex and thus for the production of infectious virus. Post-translationally, myristoylation and palmitoylation (probably on one or more of the nearby cysteines at the N-terminus) enable membrane-binding and Golgi apparatus-specific targeting and are essential for efficient packaging. In terms of processing, phosphorylated. Phosphorylation does not seem to be required for recycling to the host Golgi apparatus. Packaging is selective for underphosphorylated forms.

The protein localises to the virion tegument. It is found in the virion membrane. Its subcellular location is the host cell membrane. The protein resides in the host Golgi apparatus membrane. In terms of biological role, plays an important role in the cytoplasmic envelopment of tegument proteins and capsids during the assembly and egress processes. Also participates in viral entry at the fusion step probably by regulating the core fusion machinery. This is Cytoplasmic envelopment protein 3 (UL99) from Human cytomegalovirus (strain AD169) (HHV-5).